The sequence spans 245 residues: Uridylate kinase (245 aa).

Residue 12 to 15 participates in ATP binding; that stretch reads KISG. Gly55 is a binding site for UMP. ATP contacts are provided by Gly56 and Arg60. UMP-binding positions include Asp76 and 137 to 144; that span reads AGAPYLTT. ATP contacts are provided by Thr164, Tyr171, and Asp174.

It belongs to the UMP kinase family. Homohexamer.

It is found in the cytoplasm. The enzyme catalyses UMP + ATP = UDP + ADP. It participates in pyrimidine metabolism; CTP biosynthesis via de novo pathway; UDP from UMP (UMPK route): step 1/1. With respect to regulation, inhibited by UTP. Catalyzes the reversible phosphorylation of UMP to UDP. This Chlamydia trachomatis serovar A (strain ATCC VR-571B / DSM 19440 / HAR-13) protein is Uridylate kinase.